The sequence spans 167 residues: NADH-ubiquinone oxidoreductase chain 6 (167 aa).

5 consecutive transmembrane segments (helical) span residues Met1–Ala21, Val27–Leu47, Val50–Tyr70, Val88–Gly108, and Trp143–Val163.

It belongs to the complex I subunit 6 family. In terms of assembly, core subunit of respiratory chain NADH dehydrogenase (Complex I) which is composed of 45 different subunits.

The protein localises to the mitochondrion inner membrane. The enzyme catalyses a ubiquinone + NADH + 5 H(+)(in) = a ubiquinol + NAD(+) + 4 H(+)(out). In terms of biological role, core subunit of the mitochondrial membrane respiratory chain NADH dehydrogenase (Complex I) which catalyzes electron transfer from NADH through the respiratory chain, using ubiquinone as an electron acceptor. Essential for the catalytic activity and assembly of complex I. The chain is NADH-ubiquinone oxidoreductase chain 6 (MT-ND6) from Osphranter robustus (Wallaroo).